The following is a 585-amino-acid chain: Probable phosphoglucomutase, cytoplasmic 2 (585 aa).

Residues 1–20 (MVSFKVSLVSTSPIDGQKPG) are disordered. Alpha-D-glucose 1,6-bisphosphate contacts are provided by R25 and S124. The active-site Phosphoserine intermediate is S124. The Mg(2+) site is built by S124, D301, D303, and D305. S124 bears the Phosphoserine mark. The alpha-D-glucose 1,6-bisphosphate site is built by D305, R306, T369, E388, S390, and K401.

The protein belongs to the phosphohexose mutase family. In terms of assembly, monomer. The cofactor is Mg(2+).

It localises to the cytoplasm. The enzyme catalyses alpha-D-glucose 1-phosphate = alpha-D-glucose 6-phosphate. It catalyses the reaction O-phospho-L-seryl-[protein] + alpha-D-glucose 1-phosphate = alpha-D-glucose 1,6-bisphosphate + L-seryl-[protein]. It carries out the reaction alpha-D-glucose 1,6-bisphosphate + L-seryl-[protein] = O-phospho-L-seryl-[protein] + alpha-D-glucose 6-phosphate. Catalyzes the reversible isomerization of alpha-D-glucose 1-phosphate to alpha-D-glucose 6-phosphate. The mechanism proceeds via the intermediate compound alpha-D-glucose 1,6-bisphosphate. This enzyme participates in both the breakdown and synthesis of glucose. The chain is Probable phosphoglucomutase, cytoplasmic 2 from Arabidopsis thaliana (Mouse-ear cress).